Consider the following 334-residue polypeptide: MIEADRLIQPQDLGQEDVIDRAMRPKLLDEYTGQDDTRAQLKVFIEAAKKRGEALDHMLIYGPPGLGKTTLANIVANEMGVNIKSTSGPVLEKAGDLAALLTNLEEGDVLFIDEIHRLSPVVEEILYPAMEDYQLDIMIGEGPAARSIKLDLPPFTLVGATTRAGSLTSPLRARFGIPLRLEFYNVRDLSSIVARSAKVMDVPMDEGGAEEIARRSRGTPRIANRLLRRVRDFAEVKHDGAISRAVAQSALDLLDVDSEGFDYMDRKLLLAIIDKFMGGPVGLDNLAAAIGEERETIEDVLEPFLIQQGFVQRTPRGRIATARAYSHFDLIKPD.

Residues 4–184 (ADRLIQPQDL…FGIPLRLEFY (181 aa)) are large ATPase domain (RuvB-L). ATP contacts are provided by residues arginine 24, glycine 65, lysine 68, threonine 69, threonine 70, 131-133 (EDY), arginine 174, tyrosine 184, and arginine 221. A Mg(2+)-binding site is contributed by threonine 69. The segment at 185-255 (NVRDLSSIVA…VAQSALDLLD (71 aa)) is small ATPAse domain (RuvB-S). The segment at 258-334 (SEGFDYMDRK…YSHFDLIKPD (77 aa)) is head domain (RuvB-H). DNA contacts are provided by arginine 294, arginine 313, and arginine 318.

This sequence belongs to the RuvB family. As to quaternary structure, homohexamer. Forms an RuvA(8)-RuvB(12)-Holliday junction (HJ) complex. HJ DNA is sandwiched between 2 RuvA tetramers; dsDNA enters through RuvA and exits via RuvB. An RuvB hexamer assembles on each DNA strand where it exits the tetramer. Each RuvB hexamer is contacted by two RuvA subunits (via domain III) on 2 adjacent RuvB subunits; this complex drives branch migration. In the full resolvosome a probable DNA-RuvA(4)-RuvB(12)-RuvC(2) complex forms which resolves the HJ.

Its subcellular location is the cytoplasm. The catalysed reaction is ATP + H2O = ADP + phosphate + H(+). Its function is as follows. The RuvA-RuvB-RuvC complex processes Holliday junction (HJ) DNA during genetic recombination and DNA repair, while the RuvA-RuvB complex plays an important role in the rescue of blocked DNA replication forks via replication fork reversal (RFR). RuvA specifically binds to HJ cruciform DNA, conferring on it an open structure. The RuvB hexamer acts as an ATP-dependent pump, pulling dsDNA into and through the RuvAB complex. RuvB forms 2 homohexamers on either side of HJ DNA bound by 1 or 2 RuvA tetramers; 4 subunits per hexamer contact DNA at a time. Coordinated motions by a converter formed by DNA-disengaged RuvB subunits stimulates ATP hydrolysis and nucleotide exchange. Immobilization of the converter enables RuvB to convert the ATP-contained energy into a lever motion, pulling 2 nucleotides of DNA out of the RuvA tetramer per ATP hydrolyzed, thus driving DNA branch migration. The RuvB motors rotate together with the DNA substrate, which together with the progressing nucleotide cycle form the mechanistic basis for DNA recombination by continuous HJ branch migration. Branch migration allows RuvC to scan DNA until it finds its consensus sequence, where it cleaves and resolves cruciform DNA. This chain is Holliday junction branch migration complex subunit RuvB, found in Shewanella amazonensis (strain ATCC BAA-1098 / SB2B).